A 195-amino-acid polypeptide reads, in one-letter code: NADH-quinone oxidoreductase subunit B (195 aa).

Residues C74, C75, C139, and C169 each contribute to the [4Fe-4S] cluster site.

The protein belongs to the complex I 20 kDa subunit family. In terms of assembly, NDH-1 is composed of 14 different subunits. Subunits NuoB, C, D, E, F, and G constitute the peripheral sector of the complex. [4Fe-4S] cluster is required as a cofactor.

The protein localises to the cell inner membrane. The catalysed reaction is a quinone + NADH + 5 H(+)(in) = a quinol + NAD(+) + 4 H(+)(out). NDH-1 shuttles electrons from NADH, via FMN and iron-sulfur (Fe-S) centers, to quinones in the respiratory chain. The immediate electron acceptor for the enzyme in this species is believed to be ubiquinone. Couples the redox reaction to proton translocation (for every two electrons transferred, four hydrogen ions are translocated across the cytoplasmic membrane), and thus conserves the redox energy in a proton gradient. This is NADH-quinone oxidoreductase subunit B from Methylobacterium radiotolerans (strain ATCC 27329 / DSM 1819 / JCM 2831 / NBRC 15690 / NCIMB 10815 / 0-1).